A 313-amino-acid chain; its full sequence is Putative S-adenosyl-L-methionine-dependent methyltransferase MAP_4064c (313 aa).

S-adenosyl-L-methionine-binding positions include Asp129 and 158 to 159 (DL).

Belongs to the UPF0677 family.

Functionally, exhibits S-adenosyl-L-methionine-dependent methyltransferase activity. The polypeptide is Putative S-adenosyl-L-methionine-dependent methyltransferase MAP_4064c (Mycolicibacterium paratuberculosis (strain ATCC BAA-968 / K-10) (Mycobacterium paratuberculosis)).